A 231-amino-acid polypeptide reads, in one-letter code: Thermonuclease (231 aa).

Residues 1–26 (MLVMTEYLLSAGICMAIVSILLIGMA) form the signal peptide. Propeptides lie at residues 27–63 (ISNV…SANA) and 64–82 (SQTD…TVYS). Positions 61-73 (ANASQTDNGVNRS) are enriched in polar residues. Residues 61–86 (ANASQTDNGVNRSGSEDPTVYSATST) form a disordered region. A Ca(2+)-binding site is contributed by aspartate 103. Arginine 117 is an active-site residue. Ca(2+) contacts are provided by aspartate 122 and threonine 123. Catalysis depends on residues glutamate 125 and arginine 169. Over residues 203–219 (HEQHLRKSEAQAKKEKL) the composition is skewed to basic and acidic residues. A disordered region spans residues 203–231 (HEQHLRKSEAQAKKEKLNIWSEDNADSGQ).

The protein belongs to the thermonuclease family. Ca(2+) is required as a cofactor.

It localises to the secreted. It is found in the membrane. The catalysed reaction is Endonucleolytic cleavage to nucleoside 3'-phosphates and 3'-phosphooligonucleotide end-products.. Its function is as follows. Enzyme that catalyzes the hydrolysis of both DNA and RNA at the 5' position of the phosphodiester bond. This chain is Thermonuclease, found in Staphylococcus aureus.